We begin with the raw amino-acid sequence, 357 residues long: DNA integrity scanning protein DisA (357 aa).

The DAC domain occupies 3–141 (RPTLRETVAR…GGERHVVADS (139 aa)). Residues Gly-70, Leu-88, and 101-105 (TRHRS) each bind ATP.

Belongs to the DisA family. Homooctamer. Mg(2+) serves as cofactor.

It catalyses the reaction 2 ATP = 3',3'-c-di-AMP + 2 diphosphate. In terms of biological role, participates in a DNA-damage check-point. DisA forms globular foci that rapidly scan along the chromosomes searching for lesions. Its function is as follows. Also has diadenylate cyclase activity, catalyzing the condensation of 2 ATP molecules into cyclic di-AMP (c-di-AMP). c-di-AMP likely acts as a signaling molecule that may couple DNA integrity with a cellular process. The sequence is that of DNA integrity scanning protein DisA from Mycolicibacterium paratuberculosis (strain ATCC BAA-968 / K-10) (Mycobacterium paratuberculosis).